Consider the following 234-residue polypeptide: Peroxisomal coenzyme A diphosphatase ndx-8 (234 aa).

The Nudix hydrolase domain maps to 27–162 (EQDAGVLILL…TFLIDEFYMV (136 aa)). Positions 66 to 90 (GGMMDDEDGQNVRRTAIREAYEEVG) match the Nudix box motif. 2 residues coordinate Mg(2+): E84 and E88. A helical membrane pass occupies residues 170 to 190 (YPTTYGVTALMCIVVAIGLLG). Positions 232-234 (SKI) match the Microbody targeting signal motif.

Belongs to the Nudix hydrolase family. The cofactor is Mg(2+). Requires Mn(2+) as cofactor.

Its subcellular location is the peroxisome membrane. In terms of biological role, coenzyme A diphosphatase which mediates the cleavage of CoA into 3',5'-ADP and 4'-phosphopantetheine. In Caenorhabditis elegans, this protein is Peroxisomal coenzyme A diphosphatase ndx-8 (ndx-8).